We begin with the raw amino-acid sequence, 328 residues long: E3 ubiquitin-protein ligase SINA-like 5 (328 aa).

The disordered stretch occupies residues 1-77 (MARSGGNDGH…GSPKSSQPVK (77 aa)). 2 stretches are compositionally biased toward acidic residues: residues 10 to 20 (HEEELDPELFE) and 27 to 62 (GYED…ENVT). Over residues 63–77 (TDEQSGSPKSSQPVK) the composition is skewed to polar residues. The RING-type; degenerate zinc-finger motif lies at 86-122 (CPTCCEPLKRPIYQCSNGHLACSSCCQKLNKKCSFCR). An SBD region spans residues 136–324 (VIEASIVPCP…MQICIAYGYK (189 aa)). Residues 139-197 (ASIVPCPNAKHGCKETTTYCNQSSHEKVCKFVRCSCPVSNCNYVSSYSNLKSHACSTAH) form an SIAH-type; degenerate zinc finger. Residues cysteine 144, cysteine 151, histidine 163, cysteine 167, cysteine 174, cysteine 179, histidine 191, and histidine 197 each contribute to the Zn(2+) site.

The protein belongs to the SINA (Seven in absentia) family.

The catalysed reaction is S-ubiquitinyl-[E2 ubiquitin-conjugating enzyme]-L-cysteine + [acceptor protein]-L-lysine = [E2 ubiquitin-conjugating enzyme]-L-cysteine + N(6)-ubiquitinyl-[acceptor protein]-L-lysine.. It participates in protein modification; protein ubiquitination. Its function is as follows. E3 ubiquitin-protein ligase that mediates ubiquitination and subsequent proteasomal degradation of target proteins. E3 ubiquitin ligases accept ubiquitin from an E2 ubiquitin-conjugating enzyme in the form of a thioester and then directly transfers the ubiquitin to targeted substrates. It probably triggers the ubiquitin-mediated degradation of different substrates. This Arabidopsis thaliana (Mouse-ear cress) protein is E3 ubiquitin-protein ligase SINA-like 5.